The chain runs to 460 residues: C4-dicarboxylate transport protein (460 aa).

8 consecutive transmembrane segments (helical) span residues 21–38, 53–75, 88–110, 153–175, 196–218, 231–253, 301–323, and 363–385; these read LYFQ…IGHF, FIKL…GIAG, YALL…VVNV, IVGA…FGFA, VMFN…AMAF, LGQL…LGSI, VVGL…YLTM, and FIVL…ALIL. The disordered stretch occupies residues 438-460; sequence PEDDLGVAEGPTPANAVNTTKTV.

It belongs to the dicarboxylate/amino acid:cation symporter (DAACS) (TC 2.A.23) family.

The protein localises to the cell inner membrane. Responsible for the transport of dicarboxylates such as succinate, fumarate, and malate from the periplasm across the membrane. This is C4-dicarboxylate transport protein from Pseudomonas syringae pv. tomato (strain ATCC BAA-871 / DC3000).